The following is a 229-amino-acid chain: UPF0758 protein Cagg_0777 (229 aa).

Residues P105 to G227 form the MPN domain. H176, H178, and D189 together coordinate Zn(2+). Positions H176–D189 match the JAMM motif motif.

Belongs to the UPF0758 family.

The sequence is that of UPF0758 protein Cagg_0777 from Chloroflexus aggregans (strain MD-66 / DSM 9485).